The chain runs to 389 residues: Phosphoglycerate kinase (389 aa).

Residues 21 to 23, arginine 36, 59 to 62, arginine 112, and arginine 145 contribute to the substrate site; these read DLN and HLGR. ATP-binding positions include lysine 196, glutamate 313, and 342–345; that span reads GGDT.

It belongs to the phosphoglycerate kinase family. Monomer.

The protein localises to the cytoplasm. The enzyme catalyses (2R)-3-phosphoglycerate + ATP = (2R)-3-phospho-glyceroyl phosphate + ADP. It participates in carbohydrate degradation; glycolysis; pyruvate from D-glyceraldehyde 3-phosphate: step 2/5. In Mannheimia succiniciproducens (strain KCTC 0769BP / MBEL55E), this protein is Phosphoglycerate kinase.